The following is a 965-amino-acid chain: Valine--tRNA ligase (965 aa).

A disordered region spans residues 1-22 (MENTPSHINKTEPSLDKTYSPQ). The short motif at 56–66 (PNVTGSLHMGH) is the 'HIGH' region element. The 'KMSKS' region signature appears at 568–572 (KMSKS). Lys571 provides a ligand contact to ATP. Positions 896-965 (LIDKATELDR…IEQQATIAAL (70 aa)) form a coiled coil.

This sequence belongs to the class-I aminoacyl-tRNA synthetase family. ValS type 1 subfamily. As to quaternary structure, monomer.

Its subcellular location is the cytoplasm. The enzyme catalyses tRNA(Val) + L-valine + ATP = L-valyl-tRNA(Val) + AMP + diphosphate. Its function is as follows. Catalyzes the attachment of valine to tRNA(Val). As ValRS can inadvertently accommodate and process structurally similar amino acids such as threonine, to avoid such errors, it has a 'posttransfer' editing activity that hydrolyzes mischarged Thr-tRNA(Val) in a tRNA-dependent manner. The sequence is that of Valine--tRNA ligase from Yersinia pseudotuberculosis serotype I (strain IP32953).